Reading from the N-terminus, the 211-residue chain is Protein-L-isoaspartate O-methyltransferase 2 (211 aa).

Ser60 is a catalytic residue.

Belongs to the methyltransferase superfamily. L-isoaspartyl/D-aspartyl protein methyltransferase family.

It localises to the cytoplasm. The catalysed reaction is [protein]-L-isoaspartate + S-adenosyl-L-methionine = [protein]-L-isoaspartate alpha-methyl ester + S-adenosyl-L-homocysteine. In terms of biological role, catalyzes the methyl esterification of L-isoaspartyl residues in peptides and proteins that result from spontaneous decomposition of normal L-aspartyl and L-asparaginyl residues. It plays a role in the repair and/or degradation of damaged proteins. The chain is Protein-L-isoaspartate O-methyltransferase 2 from Nitrosospira multiformis (strain ATCC 25196 / NCIMB 11849 / C 71).